A 141-amino-acid polypeptide reads, in one-letter code: Hemoglobin subunit alpha-1/2 (141 aa).

One can recognise a Globin domain in the interval 1-141 (VLSPADKTNV…VSTVLTSKYR (141 aa)). Ser3 carries the phosphoserine modification. Lys7 is subject to N6-succinyllysine. Thr8 is modified (phosphothreonine). An N6-succinyllysine modification is found at Lys11. Residue Lys16 is modified to N6-acetyllysine; alternate. At Lys16 the chain carries N6-succinyllysine; alternate. The residue at position 24 (Tyr24) is a Phosphotyrosine. At Ser35 the chain carries Phosphoserine. N6-succinyllysine is present on Lys40. At Ser49 the chain carries Phosphoserine. Position 58 (His58) interacts with O2. Heme b is bound at residue His87. A Phosphoserine modification is found at Ser102. At Thr108 the chain carries Phosphothreonine. Residue Ser124 is modified to Phosphoserine. 2 positions are modified to phosphothreonine: Thr134 and Thr137. Residue Ser138 is modified to Phosphoserine.

The protein belongs to the globin family. Heterotetramer of two alpha chains and two beta chains. As to expression, red blood cells.

Functionally, involved in oxygen transport from the lung to the various peripheral tissues. This chain is Hemoglobin subunit alpha-1/2, found in Mustela lutreola (European mink).